A 380-amino-acid polypeptide reads, in one-letter code: Carbonic anhydrase 2 (380 aa).

The signal sequence occupies residues 1–20; that stretch reads MARTGALLLAALALAGCAQA. One can recognise an Alpha-carbonic anhydrase domain in the interval 38–322; the sequence is DHWDHSLNGE…HHHRRLLHNH (285 aa). Intrachain disulfides connect C61–C264, C194–C198, and C296–C354. Residue N101 is glycosylated (N-linked (GlcNAc...) asparagine). H112 functions as the Proton acceptor in the catalytic mechanism. N135 is a glycosylation site (N-linked (GlcNAc...) asparagine). Zn(2+) contacts are provided by H163, H165, and H182. Position 260–261 (260–261) interacts with substrate; that stretch reads TT. Residue N297 is glycosylated (N-linked (GlcNAc...) asparagine).

Belongs to the alpha-carbonic anhydrase family. As to quaternary structure, tetramer of two large and two small subunits linked by two disulfide bonds. Zn(2+) is required as a cofactor.

The protein localises to the periplasm. It carries out the reaction hydrogencarbonate + H(+) = CO2 + H2O. Reversible hydration of carbon dioxide. This chain is Carbonic anhydrase 2 (CAH2), found in Chlamydomonas reinhardtii (Chlamydomonas smithii).